A 273-amino-acid chain; its full sequence is DnaJ homolog subfamily C member 27 (273 aa).

The segment at 1 to 18 (MEASMPKRKEPGKSLRIK) is required for interaction with MAPK1. GTP is bound by residues 23-30 (GNAEVGKS), 71-75 (DMAGD), and 134-137 (NKID). The J domain occupies 217 to 273 (DSWDMLGVKPGASRDEVNKAYRKLAVLLHPDKCVAPGSEDAFKAVVNARTALLKNIK).

The protein belongs to the small GTPase superfamily. Rab family. In terms of assembly, interacts directly with MAPK1 (wild-type and kinase-deficient forms). Interacts directly (in GTP-bound form) with MAP2K1 (wild-type and kinase-deficient forms).

It is found in the nucleus. Its function is as follows. GTPase which can activate the MEK/ERK pathway and induce cell transformation when overexpressed. May act as a nuclear scaffold for MAPK1, probably by association with MAPK1 nuclear export signal leading to enhanced ERK1/ERK2 signaling. In Bos taurus (Bovine), this protein is DnaJ homolog subfamily C member 27 (DNAJC27).